The chain runs to 143 residues: Putative phosphotransferase IIA component SgcA (143 aa).

In terms of domain architecture, PTS EIIA type-2 spans 1 to 143; that stretch reads MINDIKWVQA…DDALFALVSG (143 aa). H63 functions as the Tele-phosphohistidine intermediate in the catalytic mechanism.

Its subcellular location is the cytoplasm. The phosphoenolpyruvate-dependent sugar phosphotransferase system (sugar PTS), a major carbohydrate active -transport system, catalyzes the phosphorylation of incoming sugar substrates concomitantly with their translocation across the cell membrane. The sequence is that of Putative phosphotransferase IIA component SgcA (sgcA) from Escherichia coli (strain K12).